The primary structure comprises 298 residues: O-glycoside alpha-1,2-mannosyltransferase homolog 6 (298 aa).

Residue Glu-220 is the Nucleophile of the active site.

It belongs to the glycosyltransferase 15 family.

It is found in the cytoplasm. Its subcellular location is the nucleus. Its function is as follows. Probable mannosyltransferase involved in O-glycosylation of cell wall and secreted proteins. This Schizosaccharomyces pombe (strain 972 / ATCC 24843) (Fission yeast) protein is O-glycoside alpha-1,2-mannosyltransferase homolog 6 (omh6).